Consider the following 375-residue polypeptide: Chaperone protein DnaJ (375 aa).

In terms of domain architecture, J spans 6–71; sequence DYYEVLGVPK…EKRRQYDQFG (66 aa). A CR-type zinc finger spans residues 138-220; it reads GTTKKIDVTL…CYGTGYISSK (83 aa). Residues Cys-151, Cys-154, Cys-168, Cys-171, Cys-194, Cys-197, Cys-208, and Cys-211 each contribute to the Zn(2+) site. CXXCXGXG motif repeat units lie at residues 151–158, 168–175, 194–201, and 208–215; these read CSSCHGTG, CSKCGGRG, CPDCHGTG, and CPDCYGTG.

Belongs to the DnaJ family. As to quaternary structure, homodimer. Zn(2+) is required as a cofactor.

It is found in the cytoplasm. In terms of biological role, participates actively in the response to hyperosmotic and heat shock by preventing the aggregation of stress-denatured proteins and by disaggregating proteins, also in an autonomous, DnaK-independent fashion. Unfolded proteins bind initially to DnaJ; upon interaction with the DnaJ-bound protein, DnaK hydrolyzes its bound ATP, resulting in the formation of a stable complex. GrpE releases ADP from DnaK; ATP binding to DnaK triggers the release of the substrate protein, thus completing the reaction cycle. Several rounds of ATP-dependent interactions between DnaJ, DnaK and GrpE are required for fully efficient folding. Also involved, together with DnaK and GrpE, in the DNA replication of plasmids through activation of initiation proteins. This chain is Chaperone protein DnaJ, found in Lachnospira eligens (strain ATCC 27750 / DSM 3376 / VPI C15-48 / C15-B4) (Eubacterium eligens).